We begin with the raw amino-acid sequence, 426 residues long: Histidine--tRNA ligase (426 aa).

This sequence belongs to the class-II aminoacyl-tRNA synthetase family. Homodimer.

The protein localises to the cytoplasm. It catalyses the reaction tRNA(His) + L-histidine + ATP = L-histidyl-tRNA(His) + AMP + diphosphate + H(+). The chain is Histidine--tRNA ligase from Legionella pneumophila (strain Lens).